The sequence spans 215 residues: Urease accessory protein UreG (215 aa).

24–31 (GPVGSGKT) contacts GTP.

This sequence belongs to the SIMIBI class G3E GTPase family. UreG subfamily. Homodimer. UreD, UreF and UreG form a complex that acts as a GTP-hydrolysis-dependent molecular chaperone, activating the urease apoprotein by helping to assemble the nickel containing metallocenter of UreC. The UreE protein probably delivers the nickel.

The protein localises to the cytoplasm. Its function is as follows. Facilitates the functional incorporation of the urease nickel metallocenter. This process requires GTP hydrolysis, probably effectuated by UreG. The chain is Urease accessory protein UreG from Burkholderia ambifaria (strain MC40-6).